The following is a 937-amino-acid chain: Vacuolar membrane protease (937 aa).

Topologically, residues 1-16 are cytoplasmic; it reads PNGFVKFIRSIFGYRK. The helical transmembrane segment at 17–37 threads the bilayer; sequence TSLTLFVILTYVAVLLLAYLD. Residues 38 to 373 are Vacuolar-facing; the sequence is HSLYYSVDLP…FPTSQVVVAS (336 aa). N-linked (GlcNAc...) asparagine glycans are attached at residues Asn106 and Asn140. Zn(2+)-binding residues include His154 and Asp166. The active-site Proton acceptor is the Glu201. Zn(2+) contacts are provided by Glu202, Glu227, and His300. A helical membrane pass occupies residues 374-394; it reads ILLLVLIPGISIPFLIIIFGY. The Cytoplasmic segment spans residues 395-407; it reads KKNWELSFVNVTK. A helical transmembrane segment spans residues 408 to 428; the sequence is FPISLAISAALLNLFTNGFIV. The Vacuolar portion of the chain corresponds to 429–437; sequence PFNQFLPNS. The chain crosses the membrane as a helical span at residues 438 to 458; the sequence is SPFALVAILFATFLLLNYLIL. Residues 459–475 are Cytoplasmic-facing; the sequence is NGINLIFVSYKIVNHDE. A helical transmembrane segment spans residues 476–496; the sequence is KLISIIETSFLYWVVLIYSTA. Residues 497–510 are Vacuolar-facing; it reads KLANNVIGDDHSGE. Residues 511–531 form a helical membrane-spanning segment; it reads FPIIFLCALQAVASIFGLIGW. Residues 532–580 are Cytoplasmic-facing; that stretch reads SFKPVPKEHYVVVPQEEAEPLLGSSDNFNYGSPDVEDDRLVSDGSYDWS. The chain crosses the membrane as a helical span at residues 581–601; sequence IQFLTIVPISTYLIYNSGFLV. Residues 602-618 lie on the Vacuolar side of the membrane; sequence VDGINKSIQESLISQNL. Asn606 carries an N-linked (GlcNAc...) asparagine glycan. Residues 619 to 639 form a helical membrane-spanning segment; that stretch reads IYKLLQTFAISLSIPLLPFIF. Topologically, residues 640 to 643 are cytoplasmic; sequence KVNR. Residues 644–664 traverse the membrane as a helical segment; the sequence is LFVLALFLISTIGVLFVATAD. Topologically, residues 665-937 are vacuolar; that stretch reads SFNVANPLKL…LVSVSKTVEL (273 aa). N-linked (GlcNAc...) asparagine glycans are attached at residues Asn758, Asn870, and Asn887.

It belongs to the peptidase M28 family. It depends on Zn(2+) as a cofactor.

The protein resides in the vacuole membrane. May be involved in vacuolar sorting and osmoregulation. The sequence is that of Vacuolar membrane protease from Scheffersomyces stipitis (strain ATCC 58785 / CBS 6054 / NBRC 10063 / NRRL Y-11545) (Yeast).